Reading from the N-terminus, the 619-residue chain is Very-long-chain aldehyde decarbonylase GL1-4 (619 aa).

The next 5 membrane-spanning stretches (helical) occupy residues 45 to 65 (IAFSLILPSLLLRMIHNQIWI), 94 to 114 (GWDDQILFNGLVFYAGYLAMP), 126 to 146 (GAVVTALVHTGPVEFLYYWFH), 178 to 198 (FAEHVVYFILFAIPILSTIYL), and 325 to 345 (AWYMWTLWPLAWLSMVLAWIY). In terms of domain architecture, Fatty acid hydroxylase spans 138–272 (VEFLYYWFHR…MPFYDYIYNT (135 aa)).

The protein belongs to the sterol desaturase family. In terms of assembly, homodimer.

Its subcellular location is the endoplasmic reticulum membrane. It catalyses the reaction a long-chain fatty aldehyde + 2 NADPH + O2 + H(+) = a long-chain alkane + formate + 2 NADP(+) + H2O. Aldehyde decarbonylase involved in the conversion of aldehydes to alkanes. Core component of a very-long-chain alkane synthesis complex. This Oryza sativa subsp. indica (Rice) protein is Very-long-chain aldehyde decarbonylase GL1-4.